The sequence spans 220 residues: MAYRDQPLGELALSIPRASALFRKYDMDYCCGGKQTLARAAARKELDVEVIEAELAKLAEQPIEKDWRSAPLAEIIDHIIVRYHDRHREQLPELILQATKVERVHADKPSVPKGLTKYLTMLHEELSSHMMKEEQILFPMIKQGMGSQAMGPISVMESEHDEAGELLEVIKHTTNNVTPPPEACTTWKAMYNGINELIDDLMEHISLENNVLFPRALAGE.

It belongs to the RIC family. YtfE subfamily. As to quaternary structure, homodimer.

It is found in the cytoplasm. Functionally, di-iron-containing protein involved in the repair of iron-sulfur clusters damaged by oxidative and nitrosative stress conditions. This Escherichia coli O6:K15:H31 (strain 536 / UPEC) protein is Iron-sulfur cluster repair protein YtfE.